The sequence spans 118 residues: Inner membrane protein YhaI (118 aa).

The Periplasmic segment spans residues 1-25; sequence MQWYLSVLKNYVGFSGRARRKEYWM. A helical transmembrane segment spans residues 26 to 46; that stretch reads FTLINAIVGAIINVIQLILGL. E47 is a topological domain (cytoplasmic). A helical membrane pass occupies residues 48-68; sequence LPYLSMLYLLATFLPVLALAI. Residues 69 to 77 lie on the Periplasmic side of the membrane; that stretch reads RRLHDTDRS. Residues 78–98 form a helical membrane-spanning segment; sequence GAWALLFFVPFIGWLVLLVFF. Residues 99-118 lie on the Cytoplasmic side of the membrane; it reads CTEGTSGSNRYGNDPKFGSN.

The protein to E.coli YhaH.

It is found in the cell inner membrane. In Escherichia coli O157:H7, this protein is Inner membrane protein YhaI (yhaI).